We begin with the raw amino-acid sequence, 258 residues long: MALVDYGGSSSSASEDEDCTENIQTPALITLKRPALPKAATLLGPKKPKPEEFVEDVVDDPAEHGGRMRSFKHERGNWATYVYVPATACVDQLEEFQTEAIARLEPHLELQPNESLHLSLSRTVVLQYHQIDEFSRSLQSALNSSAGFAATLQGLRIYTNEERTRTFIAAPLDAAFVEKMTAILQPIDQVMLDYRLQQFYDPASFHVSLLWCVGDQETLLNEKLTELKELLDDQDKLCLAVNEVHLKCGNKDFTYSLK.

Positions 1-20 (MALVDYGGSSSSASEDEDCT) are disordered. Residue His-117 is the Proton acceptor of the active site. AMP contacts are provided by residues 117 to 119 (HLS), Tyr-200, and 202 to 208 (PASFHVS). UMP contacts are provided by residues Tyr-200 and 204–208 (SFHVS). The Proton donor role is filled by His-206.

The protein belongs to the 2H phosphoesterase superfamily. USB1 family.

It is found in the nucleus. The catalysed reaction is a 3'-end uridylyl-uridine-RNA = a 3'-end 2',3'-cyclophospho-uridine-RNA + uridine. 3'-5' RNA exonuclease that trims the 3' end of oligo(U) tracts of the pre-U6 small nuclear RNA (snRNA) molecule, leading to the formation of a mature U6 snRNA 3' end-terminated with a 2',3'-cyclic phosphate. Participates in the U6 snRNA 3' end processing that prevents U6 snRNA degradation. This Drosophila melanogaster (Fruit fly) protein is U6 snRNA phosphodiesterase 1.